Consider the following 244-residue polypeptide: Sperm-egg fusion protein Juno (244 aa).

A signal peptide spans 1-19 (MAQWWQILLGLWAVLPTLA). Cystine bridges form between Cys27-Cys55, Cys47-Cys95, Cys56-Cys99, Cys79-Cys166, Cys86-Cys137, Cys126-Cys200, Cys130-Cys180, and Cys143-Cys160. An important for interaction with IZUMO1 region spans residues 62–81 (WEAHLEEPLLFNFSMMHCGL). Asn73 carries N-linked (GlcNAc...) asparagine glycosylation. A glycan (N-linked (GlcNAc...) asparagine) is linked at Asn185. Residue Gly222 is the site of GPI-anchor amidated glycine attachment. The propeptide occupies 223-244 (SALAPQLSYTLPAFSLCLLFHP).

This sequence belongs to the folate receptor family. In terms of assembly, monomer. Interacts with IZUMO1; the interaction is direct. IZUMO1 and IZUMO1R/JUNO form a complex with 1:1 stoichiometry. Interacts with WDR54. The protein is rapidly cleaved following fertilization, being only weakly detectable in zona-intact fertilized eggs at telophase II and undetectable at the pronuclear stage. Sheding is probably required to block to polyspermy and ensuring egg fusion with a single sperm. In terms of tissue distribution, widely expressed with higher expression in thymus, spleen and lung. Present at the cell surface of unfertilized oocytes, while it is barely detectable 30 to 40 minutes after fertilization (at protein level).

The protein resides in the cell membrane. Receptor for IZUMO1 present at the cell surface of oocytes (oolemma), which is essential for species-specific gamete recognition and fertilization. The IZUMO1:IZUMO1R/JUNO interaction is a necessary adhesion event between sperm and egg that is required for fertilization but is not sufficient for cell fusion. The ligand-receptor interaction probably does not act as a membrane 'fusogen'. Does not bind folate. In Mus musculus (Mouse), this protein is Sperm-egg fusion protein Juno.